The following is a 166-amino-acid chain: Lipoprotein signal peptidase (166 aa).

4 consecutive transmembrane segments (helical) span residues 9–29 (AGGS…FDQL), 37–57 (VFAY…LVYN), 71–91 (WQRW…CYLL), and 100–120 (FCTA…DRLL). Catalysis depends on residues aspartate 126 and aspartate 144. A helical transmembrane segment spans residues 136 to 156 (HWPAFNLADSAITIGAALLVF).

The protein belongs to the peptidase A8 family.

It localises to the cell inner membrane. The catalysed reaction is Release of signal peptides from bacterial membrane prolipoproteins. Hydrolyzes -Xaa-Yaa-Zaa-|-(S,diacylglyceryl)Cys-, in which Xaa is hydrophobic (preferably Leu), and Yaa (Ala or Ser) and Zaa (Gly or Ala) have small, neutral side chains.. It functions in the pathway protein modification; lipoprotein biosynthesis (signal peptide cleavage). Functionally, this protein specifically catalyzes the removal of signal peptides from prolipoproteins. The protein is Lipoprotein signal peptidase of Paraburkholderia phymatum (strain DSM 17167 / CIP 108236 / LMG 21445 / STM815) (Burkholderia phymatum).